A 368-amino-acid polypeptide reads, in one-letter code: BTB/POZ and TAZ domain-containing protein 5 (368 aa).

The interval 1–25 is disordered; it reads MENMDDFSPENVLAPPPPPPPMKKS. In terms of domain architecture, BTB spans 55–123; the sequence is ADVLIHTDDN…LYSSCYEKQD (69 aa). A TAZ-type zinc finger spans residues 233-324; the sequence is QTYTQLYEAM…SEQCKVPLCS (92 aa). The tract at residues 335 to 358 is caM-binding; that stretch reads RKDEKRWKLLVRNVLSTKRIGGSP.

Interacts with CUL3A. Preferentially expressed in young leaves, roots and stems.

It is found in the cytoplasm. It participates in protein modification; protein ubiquitination. May act as a substrate-specific adapter of an E3 ubiquitin-protein ligase complex (CUL3-RBX1-BTB) which mediates the ubiquitination and subsequent proteasomal degradation of target proteins. This Arabidopsis thaliana (Mouse-ear cress) protein is BTB/POZ and TAZ domain-containing protein 5 (BT5).